We begin with the raw amino-acid sequence, 143 residues long: Peptidyl-prolyl cis-trans isomerase FKBP15-3 (143 aa).

The PPIase FKBP-type domain occupies 56-143 (GKRVSVHYTG…VFDVELLNVK (88 aa)).

This sequence belongs to the FKBP-type PPIase family.

The enzyme catalyses [protein]-peptidylproline (omega=180) = [protein]-peptidylproline (omega=0). In terms of biological role, PPIases accelerate the folding of proteins. It catalyzes the cis-trans isomerization of proline imidic peptide bonds in oligopeptides. In Arabidopsis thaliana (Mouse-ear cress), this protein is Peptidyl-prolyl cis-trans isomerase FKBP15-3 (FKBP15-3).